The sequence spans 896 residues: Protein translocase subunit SecA (896 aa).

ATP contacts are provided by residues glutamine 87, 105–109 (GEGKT), and aspartate 507. Positions 853 to 879 (ESLSENDEASETQTFRRQEKKIGRNDP) are disordered. Basic and acidic residues predominate over residues 866-876 (TFRRQEKKIGR). Residues cysteine 880, cysteine 882, cysteine 891, and histidine 892 each coordinate Zn(2+).

The protein belongs to the SecA family. Monomer and homodimer. Part of the essential Sec protein translocation apparatus which comprises SecA, SecYEG and auxiliary proteins SecDF-YajC and YidC. Zn(2+) is required as a cofactor.

The protein localises to the cell inner membrane. It is found in the cytoplasm. It carries out the reaction ATP + H2O + cellular proteinSide 1 = ADP + phosphate + cellular proteinSide 2.. Functionally, part of the Sec protein translocase complex. Interacts with the SecYEG preprotein conducting channel. Has a central role in coupling the hydrolysis of ATP to the transfer of proteins into and across the cell membrane, serving both as a receptor for the preprotein-SecB complex and as an ATP-driven molecular motor driving the stepwise translocation of polypeptide chains across the membrane. The polypeptide is Protein translocase subunit SecA (Legionella pneumophila (strain Corby)).